Here is a 163-residue protein sequence, read N- to C-terminus: Small ribosomal subunit protein uS5 (163 aa).

In terms of domain architecture, S5 DRBM spans 8 to 71 (LIEKIVDLNR…ERAKKGMVQV (64 aa)).

Belongs to the universal ribosomal protein uS5 family. In terms of assembly, part of the 30S ribosomal subunit. Contacts proteins S4 and S8.

In terms of biological role, with S4 and S12 plays an important role in translational accuracy. Its function is as follows. Located at the back of the 30S subunit body where it stabilizes the conformation of the head with respect to the body. This is Small ribosomal subunit protein uS5 from Oleidesulfovibrio alaskensis (strain ATCC BAA-1058 / DSM 17464 / G20) (Desulfovibrio alaskensis).